Reading from the N-terminus, the 462-residue chain is Putative zinc metalloprotease RSc1411 (462 aa).

A helical transmembrane segment spans residues 1-21; sequence MLTVLAFVFAIAVLIVVHELG. His-18 contributes to the Zn(2+) binding site. Residue Glu-19 is part of the active site. His-22 provides a ligand contact to Zn(2+). The helical transmembrane segment at 102–124 threads the bilayer; it reads FAIVAAGPVFNFLLAIALYALLA. Residues 201-283 form the PDZ domain; the sequence is TVRLRELPSA…MPEQNASIDI (83 aa). A run of 2 helical transmembrane segments spans residues 386–406 and 430–450; these read FVAF…LPVP and WQAV…SLAL.

Belongs to the peptidase M50B family. Requires Zn(2+) as cofactor.

Its subcellular location is the cell inner membrane. The chain is Putative zinc metalloprotease RSc1411 from Ralstonia nicotianae (strain ATCC BAA-1114 / GMI1000) (Ralstonia solanacearum).